The chain runs to 629 residues: tRNA uridine 5-carboxymethylaminomethyl modification enzyme MnmG (629 aa).

FAD contacts are provided by residues G14–G19, V126, and S181. Residue G273–F287 coordinates NAD(+). Q370 is a binding site for FAD.

This sequence belongs to the MnmG family. As to quaternary structure, homodimer. Heterotetramer of two MnmE and two MnmG subunits. Requires FAD as cofactor.

The protein resides in the cytoplasm. Its function is as follows. NAD-binding protein involved in the addition of a carboxymethylaminomethyl (cmnm) group at the wobble position (U34) of certain tRNAs, forming tRNA-cmnm(5)s(2)U34. This Geobacillus kaustophilus (strain HTA426) protein is tRNA uridine 5-carboxymethylaminomethyl modification enzyme MnmG.